The chain runs to 235 residues: Small ribosomal subunit protein uS2c (235 aa).

The protein belongs to the universal ribosomal protein uS2 family.

The protein resides in the plastid. It localises to the chloroplast. This Cryptomeria japonica (Japanese cedar) protein is Small ribosomal subunit protein uS2c (rps2).